The primary structure comprises 297 residues: Bifunctional protein FolD 1 (297 aa).

Residues 174–176 (GRS), Ser199, and Ile240 contribute to the NADP(+) site.

Belongs to the tetrahydrofolate dehydrogenase/cyclohydrolase family. In terms of assembly, homodimer.

It carries out the reaction (6R)-5,10-methylene-5,6,7,8-tetrahydrofolate + NADP(+) = (6R)-5,10-methenyltetrahydrofolate + NADPH. The enzyme catalyses (6R)-5,10-methenyltetrahydrofolate + H2O = (6R)-10-formyltetrahydrofolate + H(+). The protein operates within one-carbon metabolism; tetrahydrofolate interconversion. In terms of biological role, catalyzes the oxidation of 5,10-methylenetetrahydrofolate to 5,10-methenyltetrahydrofolate and then the hydrolysis of 5,10-methenyltetrahydrofolate to 10-formyltetrahydrofolate. This Acinetobacter baylyi (strain ATCC 33305 / BD413 / ADP1) protein is Bifunctional protein FolD 1.